A 182-amino-acid polypeptide reads, in one-letter code: Probable RNA 2'-phosphotransferase (182 aa).

The protein belongs to the KptA/TPT1 family.

Removes the 2'-phosphate from RNA via an intermediate in which the phosphate is ADP-ribosylated by NAD followed by a presumed transesterification to release the RNA and generate ADP-ribose 1''-2''-cyclic phosphate (APPR&gt;P). May function as an ADP-ribosylase. The protein is Probable RNA 2'-phosphotransferase of Acetivibrio thermocellus (strain ATCC 27405 / DSM 1237 / JCM 9322 / NBRC 103400 / NCIMB 10682 / NRRL B-4536 / VPI 7372) (Clostridium thermocellum).